The sequence spans 150 residues: Small ribosomal subunit protein uS13 (150 aa).

Belongs to the universal ribosomal protein uS13 family. As to quaternary structure, part of the 30S ribosomal subunit. Forms a loose heterodimer with protein S19. Forms two bridges to the 50S subunit in the 70S ribosome.

Located at the top of the head of the 30S subunit, it contacts several helices of the 16S rRNA. In the 70S ribosome it contacts the 23S rRNA (bridge B1a) and protein L5 of the 50S subunit (bridge B1b), connecting the 2 subunits; these bridges are implicated in subunit movement. The chain is Small ribosomal subunit protein uS13 from Methanocorpusculum labreanum (strain ATCC 43576 / DSM 4855 / Z).